The following is a 79-amino-acid chain: Sec-independent protein translocase protein TatA (79 aa).

Residues 1-21 (MGGISIWQLLIVALIVVLLFG) form a helical membrane-spanning segment. A disordered region spans residues 43 to 79 (MSSEEDKKALEDTEAAKTAQTTQQATEKKPESNKEQA). The span at 46–57 (EEDKKALEDTEA) shows a compositional bias: basic and acidic residues. Residues 58 to 67 (AKTAQTTQQA) show a composition bias toward low complexity. The segment covering 68 to 79 (TEKKPESNKEQA) has biased composition (basic and acidic residues).

The protein belongs to the TatA/E family. In terms of assembly, the Tat system comprises two distinct complexes: a TatABC complex, containing multiple copies of TatA, TatB and TatC subunits, and a separate TatA complex, containing only TatA subunits. Substrates initially bind to the TatABC complex, which probably triggers association of the separate TatA complex to form the active translocon.

The protein resides in the cell inner membrane. Functionally, part of the twin-arginine translocation (Tat) system that transports large folded proteins containing a characteristic twin-arginine motif in their signal peptide across membranes. TatA could form the protein-conducting channel of the Tat system. This is Sec-independent protein translocase protein TatA from Shewanella baltica (strain OS223).